Reading from the N-terminus, the 501-residue chain is Glutamyl-tRNA(Gln) amidotransferase subunit A (501 aa).

Residues Lys-80 and Ser-155 each act as charge relay system in the active site. The Acyl-ester intermediate role is filled by Ser-179.

It belongs to the amidase family. GatA subfamily. In terms of assembly, heterotrimer of A, B and C subunits.

It catalyses the reaction L-glutamyl-tRNA(Gln) + L-glutamine + ATP + H2O = L-glutaminyl-tRNA(Gln) + L-glutamate + ADP + phosphate + H(+). Functionally, allows the formation of correctly charged Gln-tRNA(Gln) through the transamidation of misacylated Glu-tRNA(Gln) in organisms which lack glutaminyl-tRNA synthetase. The reaction takes place in the presence of glutamine and ATP through an activated gamma-phospho-Glu-tRNA(Gln). The sequence is that of Glutamyl-tRNA(Gln) amidotransferase subunit A from Cutibacterium acnes (strain DSM 16379 / KPA171202) (Propionibacterium acnes).